Consider the following 513-residue polypeptide: Zinc finger protein 395 (513 aa).

The segment covering 17–29 has biased composition (low complexity); that stretch reads ARVLGPSASEGPS. A disordered region spans residues 17 to 56; the sequence is ARVLGPSASEGPSAAPPSEPLLEGAAPQPFTTSDDTPCQE. Over residues 45–55 the composition is skewed to polar residues; sequence PFTTSDDTPCQ. The short motif at 165–174 is the Nuclear export signal element; sequence MDEMMAAMVL. Residues 204-269 form a disordered region; the sequence is KESGDISDSG…DPFLLDEPAP (66 aa). The span at 209 to 229 shows a compositional bias: low complexity; that stretch reads ISDSGSSTTSGHWSGSSGVST. Position 248 is a phosphoserine (serine 248). Residues 280 to 305 form a C2H2-type zinc finger; that stretch reads YKCLWPNCGKVLRSIVGIKRHVKALH. Residues 335–394 are disordered; that stretch reads AAAAAAAGTPVPGTPTSEPAPTPSMTGLPLSALPPPLHKAQSSGPEHPGPESSLPSGALS. Positions 348 to 359 are enriched in polar residues; it reads TPTSEPAPTPSM. A phosphoserine mark is found at serine 376 and serine 449. Positions 376 to 391 are enriched in low complexity; the sequence is SSGPEHPGPESSLPSG.

In terms of assembly, interacts with repression-mediating E2 binding site P2 of human papillomavirus type 8 (HPV8). In terms of tissue distribution, widely expressed.

Its subcellular location is the cytoplasm. The protein localises to the nucleus. In terms of biological role, plays a role in papillomavirus genes transcription. The chain is Zinc finger protein 395 (ZNF395) from Homo sapiens (Human).